The chain runs to 274 residues: uncharacterized protein (274 aa).

The protein belongs to the type II cytokine receptor family.

This is an uncharacterized protein from Sus scrofa (Pig).